Reading from the N-terminus, the 188-residue chain is CyanoP (188 aa).

A signal peptide spans 1–23; the sequence is MLKKSLSTAVVLVTLLLSFTLTA. Residue Cys-24 is the site of N-palmitoyl cysteine attachment. Cys-24 is lipidated: S-diacylglycerol cysteine.

This sequence belongs to the PsbP family. CyanoP subfamily. Monomer. Present in about 3% of photosystem II (PSII) preparations. Purifies with partially assembled PSII complexes, in addition to a small amount of monomeric and dimeric PSII, and trimeric PSI.

It localises to the cellular thylakoid membrane. In terms of biological role, plays a role in the early stages of photosystem II (PSII) assembly; binds to D2 (psbD) and may facilitate its incorporation into PSII. Required for optimal photoautotrophic growth in the absence of Ca(2+) or Cl(-), functions in optimizing PSII water oxidation/O(2) evolving activity. Might be involved in assembly of the oxygen evolving complex. The polypeptide is CyanoP (Synechocystis sp. (strain ATCC 27184 / PCC 6803 / Kazusa)).